The following is a 254-amino-acid chain: MIALLSPAKTLDLTKPNLDIETSKPIFISEAEVIMNNLKELEIQDLCPLMKISEDLGVQTFTKIQDWNTIYYGDEKPFVLSFKGEAYRGLDADDFTKEDLEFCNDSLRILSGLYGALKPLDGTKAYRLEMGTKISIDGSKNLYDFWGNKIMEAVLKDLENHKEKVIINLASNEYYKSIKKIEKKVRVITPVFKERKGIEYKVVTVYAKKARGQMVRYITKNRITKSEDIKNFDLDGYEFNERLSEGDTWVFTRD.

The protein belongs to the UPF0246 family.

The chain is UPF0246 protein CPF_2407 from Clostridium perfringens (strain ATCC 13124 / DSM 756 / JCM 1290 / NCIMB 6125 / NCTC 8237 / Type A).